The chain runs to 117 residues: Large ribosomal subunit protein uL18 (117 aa).

This sequence belongs to the universal ribosomal protein uL18 family. As to quaternary structure, part of the 50S ribosomal subunit; part of the 5S rRNA/L5/L18/L25 subcomplex. Contacts the 5S and 23S rRNAs.

This is one of the proteins that bind and probably mediate the attachment of the 5S RNA into the large ribosomal subunit, where it forms part of the central protuberance. This Polynucleobacter asymbioticus (strain DSM 18221 / CIP 109841 / QLW-P1DMWA-1) (Polynucleobacter necessarius subsp. asymbioticus) protein is Large ribosomal subunit protein uL18.